Consider the following 105-residue polypeptide: Putative ferredoxin-3 (105 aa).

4Fe-4S ferredoxin-type domains lie at tyrosine 17–isoleucine 46 and threonine 70–alanine 100. [4Fe-4S] cluster is bound by residues cysteine 26, cysteine 29, cysteine 32, cysteine 36, cysteine 80, cysteine 83, cysteine 86, and cysteine 90.

It depends on [4Fe-4S] cluster as a cofactor.

Its function is as follows. Ferredoxins are iron-sulfur proteins that transfer electrons in a wide variety of metabolic reactions. The protein is Putative ferredoxin-3 (fdxB) of Sinorhizobium fredii (strain NBRC 101917 / NGR234).